Consider the following 74-residue polypeptide: Large ribosomal subunit protein bL31 (74 aa).

Zn(2+) contacts are provided by C16, C18, C38, and C41.

This sequence belongs to the bacterial ribosomal protein bL31 family. Type A subfamily. As to quaternary structure, part of the 50S ribosomal subunit. Zn(2+) is required as a cofactor.

In terms of biological role, binds the 23S rRNA. The protein is Large ribosomal subunit protein bL31 of Salinispora arenicola (strain CNS-205).